Reading from the N-terminus, the 504-residue chain is Protein FMP42 (504 aa).

The Vacuolar portion of the chain corresponds to 1–11 (MTSTRTLRYAQ). Residues 12 to 32 (VACACIWCLFSAGIIFGFAAL) form a helical membrane-spanning segment. Residues 33-64 (KPILISEGVYHELCDPKDGDRLLCTAQDLKLN) lie on the Cytoplasmic side of the membrane. A helical transmembrane segment spans residues 65-85 (FIFALSATVTNIMALPVGKIL). The Vacuolar portion of the chain corresponds to 86 to 91 (DMYGPR). Residues 92-112 (VCGIIGSCLLFLASGNFISAK) traverse the membrane as a helical segment. Residues 113 to 119 (HLVSLWD) are Cytoplasmic-facing. The helical transmembrane segment at 120 to 140 (PYLVGYTLLAVAGPFVFISCF) threads the bilayer. Topologically, residues 141 to 150 (QLANSFPQRS) are vacuolar. The helical transmembrane segment at 151-171 (GTVLALLTGSFDSSSALFLLY) threads the bilayer. Topologically, residues 172–186 (RLLYQNWFPTLNVSR) are cytoplasmic. The chain crosses the membrane as a helical span at residues 187 to 207 (FFTLYLIVPVFILACQLTIMP). The Vacuolar segment spans residues 208-302 (HSSYKTVNHI…KSAYEQIKSP (95 aa)). 3 positions are modified to phosphoserine: Ser-238, Ser-249, and Ser-269. Residues 303–323 (WFYLMLLFALVAMLRINYFIA) form a helical membrane-spanning segment. The Cytoplasmic segment spans residues 324–344 (TVRTQEEYLLNDPDLALKLNS). The chain crosses the membrane as a helical span at residues 345–365 (IFDMLLPLGGAVSIPFIGLLL). At 366-385 (DHTDTLSTLTILFTTSTAIG) the chain is on the vacuolar side. A helical transmembrane segment spans residues 386–406 (VFGLIPNSFTWNLIGIVLLVV). Residues 407-421 (YRPFYYTVVSDYSSK) are Cytoplasmic-facing. Residues 422 to 442 (VFGFDTFGTVYGLLSCICGIF) form a helical membrane-spanning segment. Residues 443–462 (NMSQNLLDKWTHTTFNMNPF) are Vacuolar-facing. The helical transmembrane segment at 463-483 (PINLTLVILTVVFSLTLTFYI) threads the bilayer. Topologically, residues 484-504 (RSQILPKPVNERGLSSNYQTI) are cytoplasmic.

It belongs to the SLC43A transporter (TC 2.A.1.44) family.

The protein resides in the vacuole membrane. The polypeptide is Protein FMP42 (FMP42) (Saccharomyces cerevisiae (strain ATCC 204508 / S288c) (Baker's yeast)).